A 354-amino-acid polypeptide reads, in one-letter code: Phosphatidylserine decarboxylase proenzyme (354 aa).

The helical transmembrane segment at 18–36 (YLITGVTILSFILMFQYKY) threads the bilayer. Active-site charge relay system; for autoendoproteolytic cleavage activity residues include Asp139, His198, and Ser308. The Schiff-base intermediate with substrate; via pyruvic acid; for decarboxylase activity role is filled by Ser308. Ser308 carries the post-translational modification Pyruvic acid (Ser); by autocatalysis.

Belongs to the phosphatidylserine decarboxylase family. PSD-B subfamily. Eukaryotic type I sub-subfamily. As to quaternary structure, heterodimer of a large membrane-associated beta subunit and a small pyruvoyl-containing alpha subunit. It depends on pyruvate as a cofactor. Is synthesized initially as an inactive proenzyme. Formation of the active enzyme involves a self-maturation process in which the active site pyruvoyl group is generated from an internal serine residue via an autocatalytic post-translational modification. Two non-identical subunits are generated from the proenzyme in this reaction, and the pyruvate is formed at the N-terminus of the alpha chain, which is derived from the carboxyl end of the proenzyme. The autoendoproteolytic cleavage occurs by a canonical serine protease mechanism, in which the side chain hydroxyl group of the serine supplies its oxygen atom to form the C-terminus of the beta chain, while the remainder of the serine residue undergoes an oxidative deamination to produce ammonia and the pyruvoyl prosthetic group on the alpha chain. During this reaction, the Ser that is part of the protease active site of the proenzyme becomes the pyruvoyl prosthetic group, which constitutes an essential element of the active site of the mature decarboxylase.

The protein resides in the membrane. It is found in the endoplasmic reticulum membrane. It catalyses the reaction a 1,2-diacyl-sn-glycero-3-phospho-L-serine + H(+) = a 1,2-diacyl-sn-glycero-3-phosphoethanolamine + CO2. The protein operates within phospholipid metabolism; phosphatidylethanolamine biosynthesis; phosphatidylethanolamine from CDP-diacylglycerol: step 2/2. With respect to regulation, protease activity is inhibited by PMSF. In terms of biological role, catalyzes the formation of phosphatidylethanolamine (PtdEtn) from phosphatidylserine (PtdSer). Plays a central role in phospholipid metabolism and in the interorganelle trafficking of phosphatidylserine. The sequence is that of Phosphatidylserine decarboxylase proenzyme from Plasmodium knowlesi (strain H).